Consider the following 79-residue polypeptide: Protein RALF-like 35 (79 aa).

A signal peptide spans 1–29; it reads MAAHKMSLTSLFFVSIVIVLSLFSGFGEG. Intrachain disulfides connect C45-C52 and C66-C72. Residue N68 is glycosylated (N-linked (GlcNAc...) asparagine).

It belongs to the plant rapid alkalinization factor (RALF) family.

The protein resides in the secreted. In terms of biological role, cell signaling peptide that may regulate plant stress, growth, and development. Mediates a rapid alkalinization of extracellular space by mediating a transient increase in the cytoplasmic Ca(2+) concentration leading to a calcium-dependent signaling events through a cell surface receptor and a concomitant activation of some intracellular mitogen-activated protein kinases. This Arabidopsis thaliana (Mouse-ear cress) protein is Protein RALF-like 35.